A 231-amino-acid polypeptide reads, in one-letter code: Ion-translocating oxidoreductase complex subunit E (231 aa).

The next 6 helical transmembrane spans lie at 18-38 (ALVQ…ATNA), 39-59 (LGLG…ISTL), 63-83 (TPAE…VSAV), 86-106 (LINA…PLIV), 125-145 (ALSA…MFVL), and 182-202 (PFLL…MLAG).

It belongs to the NqrDE/RnfAE family. The complex is composed of six subunits: RsxA, RsxB, RsxC, RsxD, RsxE and RsxG.

It localises to the cell inner membrane. Its function is as follows. Part of a membrane-bound complex that couples electron transfer with translocation of ions across the membrane. Required to maintain the reduced state of SoxR. The protein is Ion-translocating oxidoreductase complex subunit E of Escherichia coli O127:H6 (strain E2348/69 / EPEC).